Here is a 740-residue protein sequence, read N- to C-terminus: Probable RNA-dependent RNA polymerase 1 (740 aa).

The protein belongs to the RdRP family.

It catalyses the reaction RNA(n) + a ribonucleoside 5'-triphosphate = RNA(n+1) + diphosphate. Its function is as follows. Probably involved in the RNA silencing pathway and required for the generation of small interfering RNAs (siRNAs). This is Probable RNA-dependent RNA polymerase 1 (RDR1) from Oryza sativa subsp. japonica (Rice).